A 504-amino-acid chain; its full sequence is Alpha-L-arabinofuranosidase C (504 aa).

N-linked (GlcNAc...) asparagine glycans are attached at residues asparagine 81, asparagine 152, asparagine 269, and asparagine 329.

Belongs to the glycosyl hydrolase 51 family.

It is found in the secreted. It carries out the reaction Hydrolysis of terminal non-reducing alpha-L-arabinofuranoside residues in alpha-L-arabinosides.. It participates in glycan metabolism; L-arabinan degradation. Its function is as follows. Alpha-L-arabinofuranosidase involved in the degradation of arabinoxylan, a major component of plant hemicellulose. Acts only on small linear 1,5-alpha-linked L-arabinofuranosyl oligosaccharides. The protein is Alpha-L-arabinofuranosidase C (abfC) of Emericella nidulans (strain FGSC A4 / ATCC 38163 / CBS 112.46 / NRRL 194 / M139) (Aspergillus nidulans).